Reading from the N-terminus, the 587-residue chain is Cryptochrome-1 (587 aa).

In terms of domain architecture, Photolyase/cryptochrome alpha/beta spans 3–132; that stretch reads VNAVHWFRKG…EVIVRISHTL (130 aa). A Glycyl lysine isopeptide (Lys-Gly) (interchain with G-Cter in ubiquitin) cross-link involves residue Lys-11. The short motif at 50 to 54 is the LIR 1 element; the sequence is NRWRF. At Ser-71 the chain carries Phosphoserine; by AMPK. Positions 82 to 87 match the LIR 2 motif; sequence DVFPRL. Lys-107 participates in a covalent cross-link: Glycyl lysine isopeptide (Lys-Gly) (interchain with G-Cter in ubiquitin). Positions 151–156 match the LIR 3 motif; that stretch reads KRFQTL. Residue Lys-159 forms a Glycyl lysine isopeptide (Lys-Gly) (interchain with G-Cter in ubiquitin) linkage. A Phosphoserine; by MAPK modification is found at Ser-247. Ser-252 is a binding site for FAD. 2 short sequence motifs (LIR) span residues 255-260 and 271-276; these read LRFGCL and DLYKKV. Ser-280 is modified (phosphoserine; by AMPK). Residues 285–290 carry the LIR 6 motif; sequence SLYGQL. Gln-289 serves as a coordination point for FAD. Residue Lys-329 forms a Glycyl lysine isopeptide (Lys-Gly) (interchain with G-Cter in ubiquitin) linkage. The LIR 7 motif lies at 335-339; that stretch reads TGFPW. An FAD-binding site is contributed by His-355. Residues 371–470 form a required for inhibition of CLOCK-BMAL1-mediated transcription region; that stretch reads WISWEEGMKV…LIGVNYPKPM (100 aa). The short motif at 379-384 is the LIR 8 element; that stretch reads KVFEEL. 387–389 is a binding site for FAD; that stretch reads DAD. Short sequence motifs (LIR) lie at residues 395-400, 411-416, and 430-435; these read GSWMWL, HCYCPV, and RRYLPV. The interval 471–493 is interaction with TIMELESS; it reads VNHAEASRLNIERMKQIYQQLSR. A Glycyl lysine isopeptide (Lys-Gly) (interchain with G-Cter in ubiquitin) cross-link involves residue Lys-485. 2 short sequence motifs (LIR) span residues 486-491 and 492-497; these read QIYQQL and SRYRGL. The tract at residues 554–587 is disordered; sequence GSSSMGHGLSNGKRPSQEEDTQSIGPKVQRQSTN. Ser-569 is modified (phosphoserine).

This sequence belongs to the DNA photolyase class-1 family. As to quaternary structure, component of the circadian core oscillator, which includes the CRY proteins, CLOCK or NPAS2, BMAL1 or BMAL2, CSNK1D and/or CSNK1E, TIMELESS, and the PER proteins. Interacts directly with TIMELESS. Interacts directly with PER1, PER2 and PER3; interaction with PER2 inhibits its ubiquitination and vice versa. Interacts with FBXL21. Interacts with FBXL3. Interacts with CLOCK-BMAL1 independently of PER2 and DNA. Interacts with HDAC1, HDAC2 and SIN3B. Interacts with nuclear receptors AR, NR1D1, NR3C1/GR, RORA and RORC; the interaction with at least NR3C1/GR is ligand dependent. Interacts with PRKDC. Interacts with the G protein subunit alpha GNAS; the interaction may block GPCR-mediated regulation of cAMP concentrations. Interacts with PRMT5. Interacts with EZH2. Interacts with MYBBP1A, DOCK7, HNRNPU, RPL7A, RPL8 and RPS3. Interacts with PPP5C (via TPR repeats). Interacts with MAP1LC3B. Interacts with CLOCK. Interacts with BMAL1. Interacts weakly with HDAC3; this interaction is enhanced in the presence of FBXL3. Interacts with TRIM28, KCTD5 and DDB1 Interacts with HNF4A. Interacts with PSMD2 in a KDM8-dependent manner. Interacts with KDM8 in a FBXL3-dependent manner. Interacts with PPARG in a ligand-dependent manner. Interacts with PPARD (via domain NR LBD) and NR1I2 (via domain NR LBD) in a ligand-dependent manner. Interacts with PPARA, NR1I3 and VDR. It depends on FAD as a cofactor. (6R)-5,10-methylene-5,6,7,8-tetrahydrofolate serves as cofactor. Post-translationally, phosphorylation on Ser-247 by MAPK is important for the inhibition of CLOCK-BMAL1-mediated transcriptional activity. Phosphorylation by CSNK1E requires interaction with PER1 or PER2. Phosphorylation at Ser-71 and Ser-280 by AMPK decreases protein stability. Phosphorylation at Ser-569 exhibits a robust circadian rhythm with a peak at CT8, increases protein stability, prevents SCF(FBXL3)-mediated degradation and is antagonized by interaction with PRKDC. In terms of processing, ubiquitinated by the SCF(FBXL3) and SCF(FBXL21) complexes, regulating the balance between degradation and stabilization. The SCF(FBXL3) complex is mainly nuclear and mediates ubiquitination and subsequent degradation of CRY1. In contrast, cytoplasmic SCF(FBXL21) complex-mediated ubiquitination leads to stabilize CRY1 and counteract the activity of the SCF(FBXL3) complex. The SCF(FBXL3) and SCF(FBXL21) complexes probably mediate ubiquitination at different Lys residues. Ubiquitination at Lys-11 and Lys-107 are specifically ubiquitinated by the SCF(FBXL21) complex but not by the SCF(FBXL3) complex. Ubiquitination may be inhibited by PER2. Deubiquitinated by USP7. Undergoes autophagy-mediated degradation in the liver in a time-dependent manner. Autophagic degradation of CRY1 (an inhibitor of gluconeogenesis) occurs during periods of reduced feeding allowing induction of gluconeogenesis and maintenance of blood glucose levels. In terms of tissue distribution, expressed in all tissues tested including spleen, liver, skeletal muscle, kidney, brain, intestine, eye, harderian gland, liver and heart. Highest levels in the eye, brain, kidney and harderian gland. In the brain, especially located to the suprachiasma nucleus (SCN).

It localises to the cytoplasm. The protein localises to the nucleus. Functionally, transcriptional repressor which forms a core component of the circadian clock. The circadian clock, an internal time-keeping system, regulates various physiological processes through the generation of approximately 24 hour circadian rhythms in gene expression, which are translated into rhythms in metabolism and behavior. It is derived from the Latin roots 'circa' (about) and 'diem' (day) and acts as an important regulator of a wide array of physiological functions including metabolism, sleep, body temperature, blood pressure, endocrine, immune, cardiovascular, and renal function. Consists of two major components: the central clock, residing in the suprachiasmatic nucleus (SCN) of the brain, and the peripheral clocks that are present in nearly every tissue and organ system. Both the central and peripheral clocks can be reset by environmental cues, also known as Zeitgebers (German for 'timegivers'). The predominant Zeitgeber for the central clock is light, which is sensed by retina and signals directly to the SCN. The central clock entrains the peripheral clocks through neuronal and hormonal signals, body temperature and feeding-related cues, aligning all clocks with the external light/dark cycle. Circadian rhythms allow an organism to achieve temporal homeostasis with its environment at the molecular level by regulating gene expression to create a peak of protein expression once every 24 hours to control when a particular physiological process is most active with respect to the solar day. Transcription and translation of core clock components (CLOCK, NPAS2, BMAL1, BMAL2, PER1, PER2, PER3, CRY1 and CRY2) plays a critical role in rhythm generation, whereas delays imposed by post-translational modifications (PTMs) are important for determining the period (tau) of the rhythms (tau refers to the period of a rhythm and is the length, in time, of one complete cycle). A diurnal rhythm is synchronized with the day/night cycle, while the ultradian and infradian rhythms have a period shorter and longer than 24 hours, respectively. Disruptions in the circadian rhythms contribute to the pathology of cardiovascular diseases, cancer, metabolic syndromes and aging. A transcription/translation feedback loop (TTFL) forms the core of the molecular circadian clock mechanism. Transcription factors, CLOCK or NPAS2 and BMAL1 or BMAL2, form the positive limb of the feedback loop, act in the form of a heterodimer and activate the transcription of core clock genes and clock-controlled genes (involved in key metabolic processes), harboring E-box elements (5'-CACGTG-3') within their promoters. The core clock genes: PER1/2/3 and CRY1/2 which are transcriptional repressors form the negative limb of the feedback loop and interact with the CLOCK|NPAS2-BMAL1|BMAL2 heterodimer inhibiting its activity and thereby negatively regulating their own expression. This heterodimer also activates nuclear receptors NR1D1/2 and RORA/B/G, which form a second feedback loop and which activate and repress BMAL1 transcription, respectively. CRY1 and CRY2 have redundant functions but also differential and selective contributions at least in defining the pace of the SCN circadian clock and its circadian transcriptional outputs. More potent transcriptional repressor in cerebellum and liver than CRY2, though more effective in lengthening the period of the SCN oscillator. On its side, CRY2 seems to play a critical role in tuning SCN circadian period by opposing the action of CRY1. With CRY2, is dispensable for circadian rhythm generation but necessary for the development of intercellular networks for rhythm synchrony. Capable of translocating circadian clock core proteins such as PER proteins to the nucleus. Interacts with CLOCK-BMAL1 independently of PER proteins and is found at CLOCK-BMAL1-bound sites, suggesting that CRY may act as a molecular gatekeeper to maintain CLOCK-BMAL1 in a poised and repressed state until the proper time for transcriptional activation. Represses the CLOCK-BMAL1 induced transcription of BHLHE40/DEC1, ATF4, MTA1, KLF10 and NAMPT. May repress circadian target genes expression in collaboration with HDAC1 and HDAC2 through histone deacetylation. Mediates the clock-control activation of ATR and modulates ATR-mediated DNA damage checkpoint. In liver, mediates circadian regulation of cAMP signaling and gluconeogenesis by binding to membrane-coupled G proteins and blocking glucagon-mediated increases in intracellular cAMP concentrations and CREB1 phosphorylation. Inhibits hepatic gluconeogenesis by decreasing nuclear FOXO1 levels that down-regulates gluconeogenic gene expression. Besides its role in the maintenance of the circadian clock, is also involved in the regulation of other processes. Represses glucocorticoid receptor NR3C1/GR-induced transcriptional activity by binding to glucocorticoid response elements (GREs). Plays a key role in glucose and lipid metabolism modulation, in part, through the transcriptional regulation of genes involved in these pathways, such as LEP or ACSL4. Represses PPARD and its target genes in the skeletal muscle and limits exercise capacity. Plays an essential role in the generation of circadian rhythms in the retina. Represses the transcriptional activity of NR1I2. The protein is Cryptochrome-1 (CRY1) of Spalax judaei (Judean Mountains blind mole rat).